A 294-amino-acid polypeptide reads, in one-letter code: Probable HTH-type transcriptional regulator LrrA (294 aa).

The HTH lysR-type domain maps to 1–58 (MNITQLQILAAVVETGNFSAAALQLDLSQSAVSRAIAALEDELGVVLLSRGRFGARPT). The H-T-H motif DNA-binding region spans 18 to 37 (FSAAALQLDLSQSAVSRAIA).

The protein belongs to the LysR transcriptional regulatory family.

This Synechococcus elongatus (strain ATCC 33912 / PCC 7942 / FACHB-805) (Anacystis nidulans R2) protein is Probable HTH-type transcriptional regulator LrrA (lrrA).